Consider the following 381-residue polypeptide: uncharacterized protein (381 aa).

Positions 1-16 (MQTLLFYFFFINLIFA) are cleaved as a signal peptide. The Lumenal segment spans residues 17–303 (HDLNVKTYKP…KILENSPCPN (287 aa)). The cysteines at positions 118 and 149 are disulfide-linked. Asn133, Asn192, Asn225, Asn243, Asn246, and Asn287 each carry an N-linked (GlcNAc...) asparagine glycan. A helical transmembrane segment spans residues 304–324 (QPSIQPFGILMMLVSTIYGNF). Residues 325–359 (KNLYNCIKRNTIGYIYNSIYDFWITEGMLFPMRNM) are Cytoplasmic-facing. A helical transmembrane segment spans residues 360-380 (DIFKITAISIGLSIPVFLWLL). Lys381 is a topological domain (lumenal).

It belongs to the calreticulin family.

Its subcellular location is the endoplasmic reticulum membrane. This is an uncharacterized protein from Schizosaccharomyces pombe (strain 972 / ATCC 24843) (Fission yeast).